Consider the following 266-residue polypeptide: PDZ domain-containing protein 9 (266 aa).

The 83-residue stretch at 27-109 folds into the PDZ domain; it reads KVIQTKLTVG…GTVLQIKAYR (83 aa).

The polypeptide is PDZ domain-containing protein 9 (Pdzd9) (Mus musculus (Mouse)).